We begin with the raw amino-acid sequence, 174 residues long: UPF0113 protein AF_0058 (174 aa).

A PUA domain is found at 87–161; sequence RNRVWVNERG…KVFVENLVDR (75 aa).

It belongs to the UPF0113 family.

The sequence is that of UPF0113 protein AF_0058 from Archaeoglobus fulgidus (strain ATCC 49558 / DSM 4304 / JCM 9628 / NBRC 100126 / VC-16).